A 124-amino-acid polypeptide reads, in one-letter code: MSTTNDNTTMQRLMITDMRPLSMESIITSLTKEIITHKFIYLINNECIVRKLDERQATFTFLVNYEMKLLHKVGSTIYKKYTEYNTKYGTFPMPIFINHDGFLECIGIKPTKHTPIIYKYDLNP.

The DLNP; interaction with MAP1B signature appears at 121–124; it reads DLNP.

This sequence belongs to the pneumovirus non-structural protein 2 family. As to quaternary structure, monomer (instable). Homomultimer. Heteromultimer with NS1. Interacts with host RIGI (via N-terminus); this interaction prevents host signaling pathway involved in interferon production. Interacts with host MAP1B/microtubule-associated protein 1B.

Its subcellular location is the host mitochondrion. Plays a major role in antagonizing the type I IFN-mediated antiviral response. Acts cooperatively with NS1 to repress activation and nuclear translocation of host IFN-regulatory factor IRF3. Interacts with the host cytoplasmic sensor of viral nucleic acids RIGI and prevents the interaction with its downstream partner MAVS. Together with NS2, participates in the proteasomal degradation of host STAT2, IRF3, IRF7, TBK1 and RIGI through a NS-degradasome involving CUL2 and Elongin-C. The degradasome requires an intact mitochondrial MAVS. Induces host SOCS1 expression. Induces activation of NF-kappa-B. Suppresses premature apoptosis by an NF-kappa-B-dependent, interferon-independent mechanism promoting continued viral replication. The chain is Non-structural protein 2 (1B) from Human respiratory syncytial virus B (strain 18537).